Reading from the N-terminus, the 117-residue chain is Histone-like protein Hq1 (117 aa).

Composition is skewed to basic residues over residues 1–17 (MPAK…RSKA) and 39–50 (RKLRAAQKKLAK). A disordered region spans residues 1–117 (MPAKKRKTTR…RGRGRPRKKA (117 aa)). A compositionally biased stretch (basic and acidic residues) spans 51 to 68 (AKKDASRKLAKLRKEAAR). Residues 71–117 (AAAKKTRAPSKKGRKKATRKKGGGRSRKTARKVSTMKRGRGRPRKKA) show a composition bias toward basic residues.

Its function is as follows. Binds DNA in vitro. The polypeptide is Histone-like protein Hq1 (hcbA) (Coxiella burnetii (strain RSA 493 / Nine Mile phase I)).